The primary structure comprises 385 residues: Chaperone protein DnaJ (385 aa).

Residues 5 to 70 (DFYEVLGVSR…QKKAAYDQYG (66 aa)) form the J domain. The CR-type zinc-finger motif lies at 137-214 (GVSKEIEVPT…CHGQGRKQKT (78 aa)). Residues Cys150, Cys153, Cys167, Cys170, Cys189, Cys192, Cys202, and Cys205 each contribute to the Zn(2+) site. 4 CXXCXGXG motif repeats span residues 150–157 (CDTCDGSG), 167–174 (CGTCHGHG), 189–196 (CPTCHGKG), and 202–209 (CNECHGQG).

This sequence belongs to the DnaJ family. In terms of assembly, homodimer. Zn(2+) serves as cofactor.

The protein resides in the cytoplasm. In terms of biological role, participates actively in the response to hyperosmotic and heat shock by preventing the aggregation of stress-denatured proteins and by disaggregating proteins, also in an autonomous, DnaK-independent fashion. Unfolded proteins bind initially to DnaJ; upon interaction with the DnaJ-bound protein, DnaK hydrolyzes its bound ATP, resulting in the formation of a stable complex. GrpE releases ADP from DnaK; ATP binding to DnaK triggers the release of the substrate protein, thus completing the reaction cycle. Several rounds of ATP-dependent interactions between DnaJ, DnaK and GrpE are required for fully efficient folding. Also involved, together with DnaK and GrpE, in the DNA replication of plasmids through activation of initiation proteins. The sequence is that of Chaperone protein DnaJ from Vibrio harveyi (Beneckea harveyi).